The sequence spans 550 residues: Chaperonin GroEL (550 aa).

Residues 30–33 (TLGP), lysine 51, 87–91 (DGTTT), glycine 415, and aspartate 496 contribute to the ATP site. Positions 528–550 (EGGDMPAMPPGGMGGMGGMGGMM) are disordered. The span at 538-550 (GGMGGMGGMGGMM) shows a compositional bias: gly residues.

It belongs to the chaperonin (HSP60) family. As to quaternary structure, forms a cylinder of 14 subunits composed of two heptameric rings stacked back-to-back. Interacts with the co-chaperonin GroES.

It localises to the cytoplasm. It catalyses the reaction ATP + H2O + a folded polypeptide = ADP + phosphate + an unfolded polypeptide.. Its function is as follows. Together with its co-chaperonin GroES, plays an essential role in assisting protein folding. The GroEL-GroES system forms a nano-cage that allows encapsulation of the non-native substrate proteins and provides a physical environment optimized to promote and accelerate protein folding. This chain is Chaperonin GroEL, found in Chlorobium phaeobacteroides (strain BS1).